We begin with the raw amino-acid sequence, 463 residues long: Probable glucan endo-1,3-beta-glucosidase eglC (463 aa).

The first 18 residues, 1–18 (MQLTHLLAFALSLATSEA), serve as a signal peptide directing secretion. Asn84 carries an N-linked (GlcNAc...) asparagine glycan. The Proton donor role is filled by Glu128. N-linked (GlcNAc...) asparagine glycosylation occurs at Asn183. Glu239 serves as the catalytic Nucleophile. Asn312 carries an N-linked (GlcNAc...) asparagine glycan. 2 disordered regions span residues 317–354 (SASASSSAAGSATPVGSAVPSGSAAVNPSSSGIVSSAV) and 396–430 (SGSSATSTTAGSSSDSSSTNSGKSSSESSSTNSGA). Gly440 carries GPI-anchor amidated glycine lipidation. The propeptide at 441 to 463 (GASSVSGSVFGALVAVFAFVATL) is removed in mature form.

Belongs to the glycosyl hydrolase 17 family. In terms of processing, the GPI-anchor is attached to the protein in the endoplasmic reticulum and serves to target the protein to the cell surface. There, the glucosamine-inositol phospholipid moiety is cleaved off and the GPI-modified mannoprotein is covalently attached via its lipidless GPI glycan remnant to the 1,6-beta-glucan of the outer cell wall layer.

It localises to the cell membrane. The protein localises to the secreted. It is found in the cell wall. It catalyses the reaction Hydrolysis of (1-&gt;3)-beta-D-glucosidic linkages in (1-&gt;3)-beta-D-glucans.. Glucanases play a role in cell expansion during growth, in cell-cell fusion during mating, and in spore release during sporulation. This enzyme may be involved in beta-glucan degradation and also function biosynthetically as a transglycosylase. In Aspergillus oryzae (strain ATCC 42149 / RIB 40) (Yellow koji mold), this protein is Probable glucan endo-1,3-beta-glucosidase eglC (eglC).